We begin with the raw amino-acid sequence, 381 residues long: rRNA adenine N-6-methyltransferase (381 aa).

The span at 1 to 19 (MSSSDEQPRPRRRNQDRQH) shows a compositional bias: basic and acidic residues. Residues 1–42 (MSSSDEQPRPRRRNQDRQHPNQNRPVLGRTERDRNRRQFGQN) are disordered. N42, L44, G69, E90, D115, and A131 together coordinate S-adenosyl-L-methionine. The disordered stretch occupies residues 282–381 (RLDQKNEPRG…PGRRGGPGQR (100 aa)). Residues 301–358 (GGRDHGDRRTGGQDRGDRRTGGRDHRDRQASGHGDRRSSGRNRDDGRTGEREQGDQGG) are compositionally biased toward basic and acidic residues. The segment covering 359 to 381 (RRGPSGGGRTGGRPGRRGGPGQR) has biased composition (gly residues).

The protein belongs to the class I-like SAM-binding methyltransferase superfamily. rRNA adenine N(6)-methyltransferase family.

The enzyme catalyses adenosine(2085) in 23S rRNA + 2 S-adenosyl-L-methionine = N(6)-dimethyladenosine(2085) in 23S rRNA + 2 S-adenosyl-L-homocysteine + 2 H(+). This protein produces a dimethylation of the adenine residue at position 2085 in 23S rRNA, resulting in reduced affinity between ribosomes and macrolide-lincosamide-streptogramin B antibiotics. The protein is rRNA adenine N-6-methyltransferase (ermE) of Saccharopolyspora erythraea (strain ATCC 11635 / DSM 40517 / JCM 4748 / NBRC 13426 / NCIMB 8594 / NRRL 2338).